The following is a 272-amino-acid chain: Undecaprenyl-diphosphatase (272 aa).

The next 7 helical transmembrane spans lie at 42–62 (FGLS…VVFF), 92–112 (YLVL…EDFF), 120–140 (WVVV…EAVG), 149–169 (MGFA…VPGV), 194–214 (FLMS…EVLA), 224–244 (MFAV…RFFI), and 252–272 (LRAF…LLLL).

It belongs to the UppP family.

The protein localises to the cell membrane. The enzyme catalyses di-trans,octa-cis-undecaprenyl diphosphate + H2O = di-trans,octa-cis-undecaprenyl phosphate + phosphate + H(+). Functionally, catalyzes the dephosphorylation of undecaprenyl diphosphate (UPP). Confers resistance to bacitracin. The chain is Undecaprenyl-diphosphatase from Rubrobacter xylanophilus (strain DSM 9941 / JCM 11954 / NBRC 16129 / PRD-1).